A 248-amino-acid polypeptide reads, in one-letter code: MAGHSQFKNIMHRKGRVDAVRSKVFSKLAREITVAAKLGTPDPSMNPRLRAAILAARAENMPKDNIERAIKKAVGNDGENYEEIRYEGYGPGGAALIVEAQTDNRNRTASDVRSAFTKSGGSLAETGAVAFMFDRVGVIAFAADVADADTMLEAAIEAGADDVRSDADGHEITCAQDAYGEVSKALEARFGEPRRTGLIWKAQNTIDVDDETGEKLIRLVEVIEDQDDVQNVYVNFALSDALVEKMGA.

It belongs to the TACO1 family.

The protein resides in the cytoplasm. The chain is Probable transcriptional regulatory protein Mpop_0922 from Methylorubrum populi (strain ATCC BAA-705 / NCIMB 13946 / BJ001) (Methylobacterium populi).